The sequence spans 598 residues: Probable polysaccharide biosynthesis protein EpsC (598 aa).

The next 4 membrane-spanning stretches (helical) occupy residues 1 to 21 (MIIALDTYLVLNSVIAGYQFL), 31 to 51 (GALLLTAVSLLLSYHVCAFLF), 63 to 83 (LGELIVLLKGITLSAAVTGVI), and 87 to 107 (VYHTMFFRLLTACWVLQLLSI).

This sequence belongs to the polysaccharide synthase family.

The protein localises to the cell membrane. Its function is as follows. Involved in biofilm formation. This is Probable polysaccharide biosynthesis protein EpsC (epsC) from Bacillus subtilis (strain 168).